The primary structure comprises 364 residues: Glycerophosphodiester phosphodiesterase (364 aa).

The signal sequence occupies residues 1–18 (MKLKTLALSLLAAGVLAG). Cys19 is lipidated: N-palmitoyl cysteine. The S-diacylglycerol cysteine moiety is linked to residue Cys19. The GP-PDE domain occupies 35 to 360 (KIIIAHRGAS…DFPDTGVEFL (326 aa)). Residue His40 is the Proton acceptor of the active site. Ca(2+) is bound by residues Glu67 and Asp69. The active-site Proton donor is the His82. Glu175 lines the Ca(2+) pocket.

It belongs to the glycerophosphoryl diester phosphodiesterase family. Ca(2+) is required as a cofactor. Post-translationally, contains both ester- and amide-linked fatty acids.

The protein resides in the cell outer membrane. It carries out the reaction a sn-glycero-3-phosphodiester + H2O = an alcohol + sn-glycerol 3-phosphate + H(+). Functionally, glycerophosphodiester phosphodiesterase hydrolyzes glycerophosphodiesters into glycerol-3-phosphate (G3P) and the corresponding alcohol. Has a specific affinity for human immunoglobulin D myeloma protein. This Haemophilus influenzae (strain ATCC 51907 / DSM 11121 / KW20 / Rd) protein is Glycerophosphodiester phosphodiesterase (glpQ).